We begin with the raw amino-acid sequence, 313 residues long: UPF0252 protein AF_0384 (313 aa).

The protein belongs to the UPF0252 family.

This chain is UPF0252 protein AF_0384, found in Archaeoglobus fulgidus (strain ATCC 49558 / DSM 4304 / JCM 9628 / NBRC 100126 / VC-16).